Here is a 473-residue protein sequence, read N- to C-terminus: 7-dehydrocholesterol reductase (473 aa).

Residues 1-20 form a disordered region; that stretch reads MGERRRANASRGDKKVANGE. Transmembrane regions (helical) follow at residues 36–56, 97–117, 175–195, 264–284, 304–324, and 329–349; these read FSLA…YYFV, IYLA…DILH, WIPL…FALV, VTNS…DFFW, LGWG…LYLV, and ELST…YYIF. Residues Lys-356, Arg-360, Met-393, Trp-398, and 405 to 406 contribute to the NADP(+) site; that span reads NY. A helical membrane pass occupies residues 419-439; sequence ACGFDHLLPYFYFIYMTILLV. NADP(+)-binding positions include Asp-445, 449–453, and Tyr-460; that span reads CSSKY.

The protein belongs to the ERG4/ERG24 family.

The protein resides in the endoplasmic reticulum membrane. It carries out the reaction cholesterol + NADP(+) = 7-dehydrocholesterol + NADPH + H(+). It catalyses the reaction 7-dehydrodesmosterol + NADPH + H(+) = desmosterol + NADP(+). It participates in steroid biosynthesis; cholesterol biosynthesis. Functionally, catalyzes the last step of the cholesterol synthesis pathway, which transforms cholesta-5,7-dien-3beta-ol (7-dehydrocholesterol,7-DHC) into cholesterol by reducing the C7-C8 double bond of its sterol core. Can also metabolize cholesta-5,7,24-trien-3beta-ol (7-dehydrodemosterol, 7-DHD) to desmosterol, which is then metabolized by the Delta(24)-sterol reductase (DHCR24) to cholesterol. Modulates ferroptosis (a form of regulated cell death driven by iron-dependent lipid peroxidation) through the metabolic breakdown of the anti-ferroptotic metabolites 7-DHC and 7-DHD which, when accumulated, divert the propagation of peroxyl radical-mediated damage from phospholipid components to its sterol core, protecting plasma and mitochondrial membranes from phospholipid autoxidation. This Xenopus laevis (African clawed frog) protein is 7-dehydrocholesterol reductase (dhcr7).